Here is a 108-residue protein sequence, read N- to C-terminus: ATP-dependent Clp protease adapter protein ClpS (108 aa).

The protein belongs to the ClpS family. In terms of assembly, binds to the N-terminal domain of the chaperone ClpA.

In terms of biological role, involved in the modulation of the specificity of the ClpAP-mediated ATP-dependent protein degradation. The protein is ATP-dependent Clp protease adapter protein ClpS of Ralstonia nicotianae (strain ATCC BAA-1114 / GMI1000) (Ralstonia solanacearum).